Here is a 1367-residue protein sequence, read N- to C-terminus: Insulin-like growth factor 1 receptor (1367 aa).

The signal sequence occupies residues 1–30; that stretch reads MKSGSGGGSPTSLWGLLFLSAALSLWPTSG. A disulfide bridge connects residues Cys-33 and Cys-52. N-linked (GlcNAc...) asparagine glycans are attached at residues Asn-51, Asn-102, and Asn-135. 13 disulfides stabilise this stretch: Cys-150–Cys-178, Cys-182–Cys-205, Cys-192–Cys-211, Cys-215–Cys-224, Cys-219–Cys-230, Cys-231–Cys-239, Cys-235–Cys-248, Cys-251–Cys-260, Cys-264–Cys-276, Cys-282–Cys-303, Cys-307–Cys-321, Cys-324–Cys-328, and Cys-332–Cys-353. N-linked (GlcNAc...) asparagine glycosylation occurs at Asn-244. A glycan (N-linked (GlcNAc...) asparagine) is linked at Asn-314. Asn-417 and Asn-438 each carry an N-linked (GlcNAc...) asparagine glycan. A disulfide bridge connects residues Cys-455 and Cys-488. Fibronectin type-III domains are found at residues 491 to 609, 610 to 708, 735 to 828, and 834 to 927; these read DVLH…TNAS, VPSI…TEAE, PERK…TMPA, and IPGP…VQAK. N-linked (GlcNAc...) asparagine glycans are attached at residues Asn-534, Asn-607, Asn-622, Asn-640, Asn-747, Asn-756, Asn-764, Asn-900, and Asn-913. Residues 741–935 lie on the Extracellular side of the membrane; it reads DVMQVANTTM…AKTGYENFIH (195 aa). The helical transmembrane segment at 936-959 threads the bilayer; sequence LIIALPVAVLLIVGGLVIMLYVFH. The Cytoplasmic portion of the chain corresponds to 960-1367; the sequence is RKRNNSRLGN…ALPLPQSSTC (408 aa). The IRS1- and SHC1-binding signature appears at 977–980; sequence NPEY. Tyr-980 bears the Phosphotyrosine mark. The Protein kinase domain occupies 999–1274; sequence ITMSRELGQG…SIKEEMEPGF (276 aa). Residues 1005–1013 and Lys-1033 each bind ATP; that span reads LGQGSFGMV. Asp-1135 acts as the Proton acceptor in catalysis. 3 positions are modified to phosphotyrosine; by autocatalysis: Tyr-1161, Tyr-1165, and Tyr-1166. Glycyl lysine isopeptide (Lys-Gly) (interchain with G-Cter in ubiquitin) cross-links involve residues Lys-1168 and Lys-1171. Position 1278 is a phosphoserine; by GSK3-beta (Ser-1278). The residue at position 1282 (Ser-1282) is a Phosphoserine. The interval 1288 to 1367 is disordered; sequence PEPEELDLEP…ALPLPQSSTC (80 aa). Residues 1290–1299 show a composition bias toward acidic residues; that stretch reads PEELDLEPEN. The segment covering 1300–1316 has biased composition (low complexity); that stretch reads MESVPLDPSASSSSLPL. Residues 1317 to 1326 are compositionally biased toward basic and acidic residues; the sequence is PDRHSGHKAE.

It belongs to the protein kinase superfamily. Tyr protein kinase family. Insulin receptor subfamily. In terms of assembly, tetramer of 2 alpha and 2 beta chains linked by disulfide bonds. The alpha chains contribute to the formation of the ligand-binding domain, while the beta chain carries the kinase domain. Interacts with PIK3R1 and with the PTB/PID domains of IRS1 and SHC1 in vitro when autophosphorylated on tyrosine residues. Forms a hybrid receptor with INSR, the hybrid is a tetramer consisting of 1 alpha chain and 1 beta chain of INSR and 1 alpha chain and 1 beta chain of IGF1R. Interacts with ARRB1 and ARRB2. Interacts with GRB10. Interacts with RACK1. Interacts with SOCS1, SOCS2 and SOCS3. Interacts with 14-3-3 proteins. Interacts with NMD2. Interacts with MAP3K5. Interacts with STAT3. Found in a ternary complex with IGF1 and ITGAV:ITGB3 or ITGA6:ITGB4. Interacts (nascent precursor form) with ZFAND2B. As to quaternary structure, (Microbial infection) Interacts with human respiratory syncytial virus (HRSV) fusion glycoprotein F1/F2 heterodimer. Post-translationally, autophosphorylated on tyrosine residues in response to ligand binding. Autophosphorylation occurs in trans, i.e. one subunit of the dimeric receptor phosphorylates tyrosine residues on the other subunit. Autophosphorylation occurs in a sequential manner; Tyr-1165 is predominantly phosphorylated first, followed by phosphorylation of Tyr-1161 and Tyr-1166. While every single phosphorylation increases kinase activity, all three tyrosine residues in the kinase activation loop (Tyr-1165, Tyr-1161 and Tyr-1166) have to be phosphorylated for optimal activity. Can be autophosphorylated at additional tyrosine residues (in vitro). Autophosphorylated is followed by phosphorylation of juxtamembrane tyrosines and C-terminal serines. May also be phosphorylated at Tyr-1161 and Tyr-1166 by mTORC2. Phosphorylation of Tyr-980 is required for IRS1- and SHC1-binding. Phosphorylation of Ser-1278 by GSK-3beta restrains kinase activity and promotes cell surface expression, it requires a priming phosphorylation at Ser-1282. Dephosphorylated by PTPN1. In terms of processing, polyubiquitinated at Lys-1168 and Lys-1171 through both 'Lys-48' and 'Lys-29' linkages, promoting receptor endocytosis and subsequent degradation by the proteasome. Ubiquitination is facilitated by pre-existing phosphorylation. Sumoylated with SUMO1. Post-translationally, controlled by regulated intramembrane proteolysis (RIP). Undergoes metalloprotease-dependent constitutive ectodomain shedding to produce a membrane-anchored 52 kDa C-Terminal fragment which is further processed by presenilin gamma-secretase to yield an intracellular 50 kDa fragment. As to expression, found as a hybrid receptor with INSR in muscle, heart, kidney, adipose tissue, skeletal muscle, hepatoma, fibroblasts, spleen and placenta (at protein level). Expressed in a variety of tissues. Overexpressed in tumors, including melanomas, cancers of the colon, pancreas prostate and kidney.

Its subcellular location is the cell membrane. The enzyme catalyses L-tyrosyl-[protein] + ATP = O-phospho-L-tyrosyl-[protein] + ADP + H(+). Its activity is regulated as follows. Activated by autophosphorylation at Tyr-1165, Tyr-1161 and Tyr-1166 on the kinase activation loop; phosphorylation at all three tyrosine residues is required for optimal kinase activity. Inhibited by MSC1609119A-1, BMS-754807, PQIP, benzimidazole pyridinone, isoquinolinedione, bis-azaindole, 3-cyanoquinoline, 2,4-bis-arylamino-1,3-pyrimidine, pyrrolopyrimidine, pyrrole-5-carboxaldehyde, picropodophyllin (PPP), tyrphostin derivatives. While most inhibitors bind to the ATP binding pocket, MSC1609119A-1 functions as allosteric inhibitor and binds close to the DFG motif and the activation loop. Its function is as follows. Receptor tyrosine kinase which mediates actions of insulin-like growth factor 1 (IGF1). Binds IGF1 with high affinity and IGF2 and insulin (INS) with a lower affinity. The activated IGF1R is involved in cell growth and survival control. IGF1R is crucial for tumor transformation and survival of malignant cell. Ligand binding activates the receptor kinase, leading to receptor autophosphorylation, and tyrosines phosphorylation of multiple substrates, that function as signaling adapter proteins including, the insulin-receptor substrates (IRS1/2), Shc and 14-3-3 proteins. Phosphorylation of IRSs proteins lead to the activation of two main signaling pathways: the PI3K-AKT/PKB pathway and the Ras-MAPK pathway. The result of activating the MAPK pathway is increased cellular proliferation, whereas activating the PI3K pathway inhibits apoptosis and stimulates protein synthesis. Phosphorylated IRS1 can activate the 85 kDa regulatory subunit of PI3K (PIK3R1), leading to activation of several downstream substrates, including protein AKT/PKB. AKT phosphorylation, in turn, enhances protein synthesis through mTOR activation and triggers the antiapoptotic effects of IGFIR through phosphorylation and inactivation of BAD. In parallel to PI3K-driven signaling, recruitment of Grb2/SOS by phosphorylated IRS1 or Shc leads to recruitment of Ras and activation of the ras-MAPK pathway. In addition to these two main signaling pathways IGF1R signals also through the Janus kinase/signal transducer and activator of transcription pathway (JAK/STAT). Phosphorylation of JAK proteins can lead to phosphorylation/activation of signal transducers and activators of transcription (STAT) proteins. In particular activation of STAT3, may be essential for the transforming activity of IGF1R. The JAK/STAT pathway activates gene transcription and may be responsible for the transforming activity. JNK kinases can also be activated by the IGF1R. IGF1 exerts inhibiting activities on JNK activation via phosphorylation and inhibition of MAP3K5/ASK1, which is able to directly associate with the IGF1R. Functionally, when present in a hybrid receptor with INSR, binds IGF1. PubMed:12138094 shows that hybrid receptors composed of IGF1R and INSR isoform Long are activated with a high affinity by IGF1, with low affinity by IGF2 and not significantly activated by insulin, and that hybrid receptors composed of IGF1R and INSR isoform Short are activated by IGF1, IGF2 and insulin. In contrast, PubMed:16831875 shows that hybrid receptors composed of IGF1R and INSR isoform Long and hybrid receptors composed of IGF1R and INSR isoform Short have similar binding characteristics, both bind IGF1 and have a low affinity for insulin. The chain is Insulin-like growth factor 1 receptor (IGF1R) from Homo sapiens (Human).